The chain runs to 159 residues: Endoribonuclease YbeY (159 aa).

Residues His-125, His-129, and His-135 each coordinate Zn(2+).

The protein belongs to the endoribonuclease YbeY family. It depends on Zn(2+) as a cofactor.

The protein localises to the cytoplasm. In terms of biological role, single strand-specific metallo-endoribonuclease involved in late-stage 70S ribosome quality control and in maturation of the 3' terminus of the 16S rRNA. The polypeptide is Endoribonuclease YbeY (Thermoanaerobacter pseudethanolicus (strain ATCC 33223 / 39E) (Clostridium thermohydrosulfuricum)).